Consider the following 104-residue polypeptide: Transcription elongation factor A protein-like 9 (104 aa).

The interval 1–48 (MKPCQKMEGNLEKEDEPKPEEEPKPEEKPEEGQEPEEEEKSEETFRER) is disordered. Positions 9–31 (GNLEKEDEPKPEEEPKPEEKPEE) are enriched in basic and acidic residues. Over residues 32–41 (GQEPEEEEKS) the composition is skewed to acidic residues.

Belongs to the TFS-II family. TFA subfamily.

It is found in the nucleus. May be involved in transcriptional regulation. This chain is Transcription elongation factor A protein-like 9 (Tceal9), found in Mus musculus (Mouse).